The primary structure comprises 809 residues: Glycerol-3-phosphate acyltransferase (809 aa).

The HXXXXD motif motif lies at 306–311; the sequence is HRSHMD.

Belongs to the GPAT/DAPAT family.

It is found in the cell inner membrane. The catalysed reaction is sn-glycerol 3-phosphate + an acyl-CoA = a 1-acyl-sn-glycero-3-phosphate + CoA. It functions in the pathway phospholipid metabolism; CDP-diacylglycerol biosynthesis; CDP-diacylglycerol from sn-glycerol 3-phosphate: step 1/3. The chain is Glycerol-3-phosphate acyltransferase from Vibrio vulnificus (strain CMCP6).